Here is a 364-residue protein sequence, read N- to C-terminus: Dihydroorotate dehydrogenase (quinone) (364 aa).

Residues 61–65 (AGFDK) and Thr85 each bind FMN. Residue Lys65 coordinates substrate. 110-114 (NRMGF) lines the substrate pocket. 2 residues coordinate FMN: Asn139 and Asn170. Asn170 lines the substrate pocket. Residue Ser173 is the Nucleophile of the active site. Asn175 is a substrate binding site. 2 residues coordinate FMN: Lys214 and Ala242. A substrate-binding site is contributed by 243 to 244 (NT). FMN is bound by residues Gly266, Gly295, and 316 to 317 (YS).

It belongs to the dihydroorotate dehydrogenase family. Type 2 subfamily. As to quaternary structure, monomer. FMN is required as a cofactor.

It localises to the cell membrane. It catalyses the reaction (S)-dihydroorotate + a quinone = orotate + a quinol. It participates in pyrimidine metabolism; UMP biosynthesis via de novo pathway; orotate from (S)-dihydroorotate (quinone route): step 1/1. Functionally, catalyzes the conversion of dihydroorotate to orotate with quinone as electron acceptor. In Rhodopseudomonas palustris (strain TIE-1), this protein is Dihydroorotate dehydrogenase (quinone).